The following is a 333-amino-acid chain: Putative F-box protein At4g11580 (333 aa).

Positions 11-58 (VSEWADLNKDILELIFNKLDVMDITMGASRVCISWFLASHNKTLWNTV) constitute an F-box domain.

In Arabidopsis thaliana (Mouse-ear cress), this protein is Putative F-box protein At4g11580.